We begin with the raw amino-acid sequence, 401 residues long: Transcriptional regulator Myc-2 (401 aa).

O-linked (GlcNAc) threonine glycosylation occurs at Thr-58. The 9aaTAD signature appears at 76 to 84 (EMVSEFLGD). Disordered regions lie at residues 177 to 251 (SSKS…SRYP) and 286 to 325 (LESS…HNVL). Positions 205 to 230 (DSEDEEEEEEEEEEEEEEEEEEEEID) are enriched in acidic residues. Residues 233 to 247 (TVEKRQKRNEAEVSD) are compositionally biased toward basic and acidic residues. A compositionally biased stretch (low complexity) spans 288–297 (SSSSNNSSSN). Residues 317 to 369 (DKRRTHNVLERQRRNELKLSFFALRDEIPEVANNEKAAKVVILKKATECIHSM) enclose the bHLH domain. Residues 376–397 (LLSIKEQLRRKSEQLKHRLQQL) are leucine-zipper.

As to quaternary structure, efficient DNA binding requires dimerization with another bHLH protein. Binds DNA as a heterodimer with MAX.

The protein localises to the nucleus. Its function is as follows. Transcription factor that binds DNA in a non-specific manner, yet also specifically recognizes the core sequence 5'-CAC[GA]TG-3'. Activates the transcription of growth-related genes. The polypeptide is Transcriptional regulator Myc-2 (mycb) (Cyprinus carpio (Common carp)).